The following is a 293-amino-acid chain: Bifunctional monothiol glutaredoxin-S16, chloroplastic (293 aa).

The transit peptide at 1-62 (MAAITISSSL…APSRRRSFFI (62 aa)) directs the protein to the chloroplast. A disulfide bridge connects residues C123 and C219. A Glutaredoxin domain is found at 194-293 (EELIDRLVKE…ENGELANILN (100 aa)). K211 is a binding site for glutathione. C219 lines the [2Fe-2S] cluster pocket. Glutathione contacts are provided by residues R251, F263, and 276 to 277 (CD).

Belongs to the glutaredoxin family. CGFS subfamily. [2Fe-2S]-bridged holo-homodimer. Interacts in vitro with SUFE1, BOLA1, BOLA2 and BOLA4. Interacts in vivo only with SUFE1, BOLA1 and BOLA4. Interacts with SBP1.

The protein resides in the plastid. The protein localises to the chloroplast. The formation of an intramolecular disulfide bond negatively regulates both the N-terminal endonuclease and the C-terminal glutaredoxin activities. Its function is as follows. May only reduce GSH-thiol disulfides, but not protein disulfides. Participates probably to the maturation of iron-sulfur proteins and to the regulation of the redox state of the BOLA proteins. The GRXS16-BOLA1 heterodimer binds a labile, oxygen sensitive iron-sulfur cluster. Able to cleave linearized DNA in vitro. This Arabidopsis thaliana (Mouse-ear cress) protein is Bifunctional monothiol glutaredoxin-S16, chloroplastic.